The primary structure comprises 98 residues: Aspartyl/glutamyl-tRNA(Asn/Gln) amidotransferase subunit C (98 aa).

Belongs to the GatC family. In terms of assembly, heterotrimer of A, B and C subunits.

It carries out the reaction L-glutamyl-tRNA(Gln) + L-glutamine + ATP + H2O = L-glutaminyl-tRNA(Gln) + L-glutamate + ADP + phosphate + H(+). It catalyses the reaction L-aspartyl-tRNA(Asn) + L-glutamine + ATP + H2O = L-asparaginyl-tRNA(Asn) + L-glutamate + ADP + phosphate + 2 H(+). Its function is as follows. Allows the formation of correctly charged Asn-tRNA(Asn) or Gln-tRNA(Gln) through the transamidation of misacylated Asp-tRNA(Asn) or Glu-tRNA(Gln) in organisms which lack either or both of asparaginyl-tRNA or glutaminyl-tRNA synthetases. The reaction takes place in the presence of glutamine and ATP through an activated phospho-Asp-tRNA(Asn) or phospho-Glu-tRNA(Gln). This chain is Aspartyl/glutamyl-tRNA(Asn/Gln) amidotransferase subunit C, found in Arthrobacter sp. (strain FB24).